A 329-amino-acid chain; its full sequence is NAD(+) hydrolase TcpA (329 aa).

Residues V5–R134 form the MPN domain. Residues F192–L324 form the TIR domain. NAD(+) is bound by residues A201–H202 and S231. Residue E267 is part of the active site.

The catalysed reaction is NAD(+) + H2O = ADP-D-ribose + nicotinamide + H(+). In terms of biological role, NAD(+) hydrolase (NADase) that catalyzes cleavage of NAD(+) into ADP-D-ribose (ADPR) and nicotinamide. The chain is NAD(+) hydrolase TcpA from Theionarchaea archaeon (strain DG-70-1).